Reading from the N-terminus, the 360-residue chain is Cyclin-dependent kinase 10 (360 aa).

The Protein kinase domain maps to 39–323 (FEKLNRIGEG…AGDCLESSYF (285 aa)). ATP is bound by residues 45–53 (IGEGTYGIV) and Lys68. Asp163 functions as the Proton acceptor in the catalytic mechanism. Phosphothreonine is present on Thr196. The interval 334 to 360 (LMPTFPHHRNKRAAPATSEGQSKRCKP) is disordered.

Belongs to the protein kinase superfamily. CMGC Ser/Thr protein kinase family. CDC2/CDKX subfamily. Heterodimer with CCNQ, the interaction is required for kinase activity. Interacts with ETS2. Interacts with PRK2.

It localises to the cytoplasm. It is found in the cytoskeleton. The protein resides in the cilium basal body. It carries out the reaction L-seryl-[protein] + ATP = O-phospho-L-seryl-[protein] + ADP + H(+). It catalyses the reaction L-threonyl-[protein] + ATP = O-phospho-L-threonyl-[protein] + ADP + H(+). Functionally, cyclin-dependent kinase that phosphorylates the transcription factor ETS2 (in vitro) and positively controls its proteasomal degradation (in cells). Involved in the regulation of actin cytoskeleton organization through the phosphorylation of actin dynamics regulators such as PKN2. Is a negative regulator of ciliogenesis through phosphorylation of PKN2 and promotion of RhoA signaling. The chain is Cyclin-dependent kinase 10 (CDK10) from Homo sapiens (Human).